The sequence spans 261 residues: MIVKTRAIVLREIRYRDQSKICSLFTREFGLLSVIIKGGRNPKSKLAGRFIAGTVLDIVLYKKTTREIQLVSEGNLLFSPMVPQPDIERYAIMYRIIDLVSQSIDGQEKNIPLFSLIASVLEELYSTSDRFRLLYSWFLLKLVSLLGFEPSIHRCVLSHEEISPATLAENKGELCFLFNPGGVALPASKSVIENENRPLSMATYALLSAISSTPLNLLKNIEAIPPQTDLLCNLLEEYCTLHLVHHPHKKNIAIVSQILSE.

It belongs to the RecO family.

Its function is as follows. Involved in DNA repair and RecF pathway recombination. This Chlorobium phaeobacteroides (strain DSM 266 / SMG 266 / 2430) protein is DNA repair protein RecO.